We begin with the raw amino-acid sequence, 690 residues long: Probable xyloglucan glycosyltransferase 1 (690 aa).

Transmembrane regions (helical) follow at residues 120–140 (AFLL…AQGW) and 166–186 (LEYL…LFLI). Residue Asp-272 is part of the active site. Substrate contacts are provided by Asp-331 and Asp-333. Asp-425 is a catalytic residue. Transmembrane regions (helical) follow at residues 503–523 (LILP…TMFV) and 528–548 (LPAW…ILPA). A disordered region spans residues 607–637 (QPKQQRVGSAPNLDSLAKESHPKKDSKKKKH). 2 helical membrane passes run 640-659 (IYQK…ARSL) and 665-685 (IHFY…LDLI).

Belongs to the glycosyltransferase 2 family. Plant cellulose synthase-like C subfamily.

The protein localises to the golgi apparatus membrane. In terms of biological role, probable beta-1,4-glucan synthase rather involved in the synthesis of the xyloglucan backbone than cellulose. Seems to work simultaneously with xyloglucan 6-xylosyltransferase. Xyloglucan is a noncellulosic polysaccharides of plant cell wall and consists of a glucan backbone substituted by xylose, galactose and fucose. This is Probable xyloglucan glycosyltransferase 1 (CSLC1) from Oryza sativa subsp. japonica (Rice).